We begin with the raw amino-acid sequence, 418 residues long: CinA-like protein (418 aa).

This sequence belongs to the CinA family.

The polypeptide is CinA-like protein (Cytophaga hutchinsonii (strain ATCC 33406 / DSM 1761 / CIP 103989 / NBRC 15051 / NCIMB 9469 / D465)).